The chain runs to 42 residues: Photosystem I reaction center subunit IX (42 aa).

The chain crosses the membrane as a helical span at residues 7-27; the sequence is YLSTAPVLATLWFGFLAGLLI.

Belongs to the PsaJ family.

It localises to the plastid. It is found in the chloroplast thylakoid membrane. Its function is as follows. May help in the organization of the PsaE and PsaF subunits. The polypeptide is Photosystem I reaction center subunit IX (Psilotum nudum (Whisk fern)).